Reading from the N-terminus, the 481-residue chain is 3-isopropylmalate dehydratase large subunit (481 aa).

Cys355, Cys415, and Cys418 together coordinate [4Fe-4S] cluster.

It belongs to the aconitase/IPM isomerase family. LeuC type 1 subfamily. In terms of assembly, heterodimer of LeuC and LeuD. [4Fe-4S] cluster is required as a cofactor.

It carries out the reaction (2R,3S)-3-isopropylmalate = (2S)-2-isopropylmalate. It functions in the pathway amino-acid biosynthesis; L-leucine biosynthesis; L-leucine from 3-methyl-2-oxobutanoate: step 2/4. Catalyzes the isomerization between 2-isopropylmalate and 3-isopropylmalate, via the formation of 2-isopropylmaleate. The chain is 3-isopropylmalate dehydratase large subunit from Symbiobacterium thermophilum (strain DSM 24528 / JCM 14929 / IAM 14863 / T).